A 73-amino-acid chain; its full sequence is Putative antitoxin VapB18 (73 aa).

The protein belongs to the UPF0330 family.

Possibly the antitoxin component of a type II toxin-antitoxin (TA) system. Its cognate toxin is VapC18 (Potential). The polypeptide is Putative antitoxin VapB18 (vapB18) (Archaeoglobus fulgidus (strain ATCC 49558 / DSM 4304 / JCM 9628 / NBRC 100126 / VC-16)).